We begin with the raw amino-acid sequence, 515 residues long: RNA-splicing ligase RtcB homolog (515 aa).

Mn(2+) contacts are provided by aspartate 129, cysteine 132, histidine 237, histidine 269, and histidine 363. Asparagine 236–glutamate 240 is a GMP binding site. GMP-binding positions include histidine 363–asparagine 364, glycine 412–methionine 415, serine 419, histidine 438–glycine 441, and lysine 514. Histidine 438 functions as the GMP-histidine intermediate in the catalytic mechanism.

Belongs to the RtcB family. As to quaternary structure, catalytic component of the tRNA-splicing ligase complex. Mn(2+) is required as a cofactor.

It catalyses the reaction a 3'-end 3'-phospho-ribonucleotide-RNA + a 5'-end dephospho-ribonucleoside-RNA + GTP = a ribonucleotidyl-ribonucleotide-RNA + GMP + diphosphate. The enzyme catalyses a 3'-end 2',3'-cyclophospho-ribonucleotide-RNA + a 5'-end dephospho-ribonucleoside-RNA + GTP + H2O = a ribonucleotidyl-ribonucleotide-RNA + GMP + diphosphate + H(+). Functionally, catalytic subunit of the tRNA-splicing ligase complex that acts by directly joining spliced tRNA halves to mature-sized tRNAs by incorporating the precursor-derived splice junction phosphate into the mature tRNA as a canonical 3',5'-phosphodiester. May act as an RNA ligase with broad substrate specificity, and may function toward other RNAs. In Ostreococcus tauri, this protein is RNA-splicing ligase RtcB homolog.